A 340-amino-acid polypeptide reads, in one-letter code: Solute carrier family 35 member G3 (340 aa).

The interval 11 to 33 (PDFTQPSPPSTPASLPSKHHHRC) is disordered. 9 consecutive transmembrane segments (helical) span residues 39 to 59 (TKGL…VGPF), 69 to 89 (LPSL…ALLL), 107 to 127 (FLHA…VQVV), 160 to 180 (AWCG…PGLG), 189 to 209 (LYTA…SLGL), 223 to 243 (TVAF…LFVL), 257 to 277 (CVVA…YAVT), 283 to 303 (LVCA…YYVL), and 307 to 327 (VAPS…IITA). Residues 51–176 (LSAGFVGPFS…STLGLIIIVG (126 aa)) form the EamA 1 domain. The EamA 2 domain occupies 274 to 327 (YAVTKAHPALVCAVLHSEVVVALMLQYYVLYETVAPSDIMGAGVVLGSIAIITA).

This sequence belongs to the SLC35G solute transporter family.

It is found in the membrane. This chain is Solute carrier family 35 member G3 (Slc35g3), found in Mus musculus (Mouse).